A 352-amino-acid polypeptide reads, in one-letter code: Photosystem II D2 protein (352 aa).

Thr-2 is modified (N-acetylthreonine). Thr-2 carries the phosphothreonine modification. Residues 40–60 traverse the membrane as a helical segment; it reads CAYFALGGWLTGTTFVTSWYT. His-117 lines the chlorophyll a pocket. A helical membrane pass occupies residues 124–140; the sequence is GFMLRQFEIARSVNLRP. Residues Gln-129 and Asn-142 each contribute to the pheophytin a site. Residues 152–165 traverse the membrane as a helical segment; that stretch reads VFVSVFLIYPLGQS. His-197 provides a ligand contact to chlorophyll a. The chain crosses the membrane as a helical span at residues 207-227; sequence AALLCAIHGATVENTLFEDGD. Positions 214 and 261 each coordinate a plastoquinone. His-214 contacts Fe cation. His-268 serves as a coordination point for Fe cation. A helical transmembrane segment spans residues 278–294; it reads GLWMSAIGVVGLALNLR.

This sequence belongs to the reaction center PufL/M/PsbA/D family. In terms of assembly, PSII is composed of 1 copy each of membrane proteins PsbA, PsbB, PsbC, PsbD, PsbE, PsbF, PsbH, PsbI, PsbJ, PsbK, PsbL, PsbM, PsbT, PsbX, PsbY, PsbZ, Psb30/Ycf12, at least 3 peripheral proteins of the oxygen-evolving complex and a large number of cofactors. It forms dimeric complexes. The cofactor is The D1/D2 heterodimer binds P680, chlorophylls that are the primary electron donor of PSII, and subsequent electron acceptors. It shares a non-heme iron and each subunit binds pheophytin, quinone, additional chlorophylls, carotenoids and lipids. There is also a Cl(-1) ion associated with D1 and D2, which is required for oxygen evolution. The PSII complex binds additional chlorophylls, carotenoids and specific lipids.. Post-translationally, phosphorylated in vitro.

The protein resides in the plastid. The protein localises to the chloroplast thylakoid membrane. The catalysed reaction is 2 a plastoquinone + 4 hnu + 2 H2O = 2 a plastoquinol + O2. Photosystem II (PSII) is a light-driven water:plastoquinone oxidoreductase that uses light energy to abstract electrons from H(2)O, generating O(2) and a proton gradient subsequently used for ATP formation. It consists of a core antenna complex that captures photons, and an electron transfer chain that converts photonic excitation into a charge separation. The D1/D2 (PsbA/PsbD) reaction center heterodimer binds P680, the primary electron donor of PSII as well as several subsequent electron acceptors. D2 is needed for assembly of a stable PSII complex. The sequence is that of Photosystem II D2 protein from Chlamydomonas reinhardtii (Chlamydomonas smithii).